A 549-amino-acid chain; its full sequence is Arginine-containing cyclodipeptide synthase amaA (549 aa).

The short motif at Asp445–Glu449 is the Conserved DDXXE motif element.

This sequence belongs to the arginine-containing cyclodipeptide synthase family.

The enzyme catalyses L-prolyl-tRNA(Pro) + L-arginyl-tRNA(Arg) = cyclo(L-arginyl-L-prolyl) + tRNA(Pro) + tRNA(Arg) + 2 H(+). The protein operates within secondary metabolite biosynthesis. Functionally, arginine-containing cyclodipeptide synthase; part of the cluster that mediates the biosynthesis of a highly modified cyclo-arginine-proline dipeptide (cRP). Within the pathway, amaA acts as the scaffold-generating enzyme and is responsible for formation of the cyclo-Arg-Pro diketopiperazine (cRW) from L-arginyl-tRNA(Arg) + L-prolyl-tRNA(Pro). Additional enzymes from the cluster then further modify the cyclo-Arg-Pro diketopiperazine (cRW) scaffold. The chain is Arginine-containing cyclodipeptide synthase amaA from Apiospora montagnei (Sphaeria apiospora).